Consider the following 493-residue polypeptide: Glutamate--tRNA ligase (493 aa).

Positions 10-20 (PSPTGTPHVGL) match the 'HIGH' region motif. A 'KMSKS' region motif is present at residues 254 to 258 (KLSKR). Lys257 contacts ATP.

Belongs to the class-I aminoacyl-tRNA synthetase family. Glutamate--tRNA ligase type 1 subfamily. In terms of assembly, monomer.

It is found in the cytoplasm. The enzyme catalyses tRNA(Glu) + L-glutamate + ATP = L-glutamyl-tRNA(Glu) + AMP + diphosphate. In terms of biological role, catalyzes the attachment of glutamate to tRNA(Glu) in a two-step reaction: glutamate is first activated by ATP to form Glu-AMP and then transferred to the acceptor end of tRNA(Glu). The chain is Glutamate--tRNA ligase from Corynebacterium glutamicum (strain ATCC 13032 / DSM 20300 / JCM 1318 / BCRC 11384 / CCUG 27702 / LMG 3730 / NBRC 12168 / NCIMB 10025 / NRRL B-2784 / 534).